A 342-amino-acid polypeptide reads, in one-letter code: Endo-1,4-beta-xylanase A (342 aa).

The GH10 domain maps to 11–342; it reads EMLNLSLAKT…KEALYRILRF (332 aa). The active-site Proton donor is the Glu-144. The Nucleophile role is filled by Glu-252.

The protein belongs to the glycosyl hydrolase 10 (cellulase F) family. Cytoplasmic xylanase subfamily.

It localises to the cytoplasm. It carries out the reaction Endohydrolysis of (1-&gt;4)-beta-D-xylosidic linkages in xylans.. It functions in the pathway glycan degradation; xylan degradation. The sequence is that of Endo-1,4-beta-xylanase A (xynA) from Caldicellulosiruptor saccharolyticus (Caldocellum saccharolyticum).